A 171-amino-acid chain; its full sequence is Protein BTG1 (171 aa).

S159 carries the phosphoserine modification.

Belongs to the BTG family. As to quaternary structure, interacts with CNOT7 and CNOT8.

In terms of biological role, anti-proliferative protein. The protein is Protein BTG1 (BTG1) of Homo sapiens (Human).